A 589-amino-acid polypeptide reads, in one-letter code: PAN2-PAN3 deadenylation complex subunit pan3 (589 aa).

The disordered stretch occupies residues 1–32 (MSVRKNSPASPKPTSRSRESSRSPSVTDLKDH). The segment at 34-63 (KAKRTLCRNILLYGSCKHSENGCAFRHDGP) adopts a C3H1-type zinc-finger fold. Residues 74–94 (YSVKKKLNAASASFQPVRALP) carry the PABPC-interacting motif-2 (PAM-2) motif. The tract at residues 201 to 457 (EASRQTISAL…NLELFLQNHI (257 aa)) is pseudokinase domain. ATP is bound by residues lysine 255 and 302-309 (DFYPCTTT). The stretch at 458-496 (ESFFPIMSSPYVECEKMERKISDAFQHGRFFNILCKIMF) forms a coiled coil. The segment at 497-589 (IIDNNRASRE…DNVYEMEINS (93 aa)) is knob domain.

This sequence belongs to the protein kinase superfamily. PAN3 family. In terms of assembly, homodimer. Forms a heterotrimer with a catalytic subunit pan2 to form the poly(A)-nuclease (PAN) deadenylation complex. Interacts (via PAM-2 motif) with poly(A)-binding protein pab1 (via PABC domain), conferring substrate specificity of the enzyme complex.

It is found in the cytoplasm. The protein resides in the nucleus. Functionally, regulatory subunit of the poly(A)-nuclease (PAN) deadenylation complex, one of two cytoplasmic mRNA deadenylases involved in mRNA turnover. PAN specifically shortens poly(A) tails of RNA and the activity is stimulated by poly(A)-binding protein pab1. PAN deadenylation is followed by rapid degradation of the shortened mRNA tails by the CCR4-NOT complex. Deadenylated mRNAs are then degraded by two alternative mechanisms, namely exosome-mediated 3'-5' exonucleolytic degradation, or deadenylation-dependent mRNA decaping and subsequent 5'-3' exonucleolytic degradation by xrn1. May also be involved in post-transcriptional maturation of mRNA poly(A) tails. ppk26/pan3 acts as a positive regulator for PAN activity, recruiting the catalytic subunit pan2 to mRNA via its interaction with RNA and with pab1. This chain is PAN2-PAN3 deadenylation complex subunit pan3 (ppk26), found in Schizosaccharomyces pombe (strain 972 / ATCC 24843) (Fission yeast).